We begin with the raw amino-acid sequence, 212 residues long: Uracil phosphoribosyltransferase (212 aa).

5-phospho-alpha-D-ribose 1-diphosphate contacts are provided by residues Arg-78, Arg-103, and 130-138; that span reads DPMLATGGS. Residues Ile-193 and 198 to 200 contribute to the uracil site; that span reads GDA. Asp-199 lines the 5-phospho-alpha-D-ribose 1-diphosphate pocket.

This sequence belongs to the UPRTase family. Requires Mg(2+) as cofactor.

The catalysed reaction is UMP + diphosphate = 5-phospho-alpha-D-ribose 1-diphosphate + uracil. Its pathway is pyrimidine metabolism; UMP biosynthesis via salvage pathway; UMP from uracil: step 1/1. Allosterically activated by GTP. Its function is as follows. Catalyzes the conversion of uracil and 5-phospho-alpha-D-ribose 1-diphosphate (PRPP) to UMP and diphosphate. The polypeptide is Uracil phosphoribosyltransferase (Pseudomonas paraeruginosa (strain DSM 24068 / PA7) (Pseudomonas aeruginosa (strain PA7))).